Consider the following 133-residue polypeptide: Large ribosomal subunit protein uL16c (133 aa).

The protein belongs to the universal ribosomal protein uL16 family. In terms of assembly, part of the 50S ribosomal subunit.

It is found in the plastid. It localises to the chloroplast. This Liriodendron tulipifera (Tuliptree) protein is Large ribosomal subunit protein uL16c.